Reading from the N-terminus, the 280-residue chain is Endochitinase A (280 aa).

The N-terminal stretch at 1–25 is a signal peptide; the sequence is MANAPRILALGLLALLCAAAGPAAA. The Chitin-binding type-1 domain occupies 26–60; the sequence is QNCGCQPNFCCSKFGYCGTTDAYCGDGCQSGPCRS. Disulfide bonds link C28–C36, C30–C42, C35–C49, and C53–C58. Residues 61–77 are hinge region (poly-Gly); that stretch reads GGGGGGGGGGGGGGSGG. The tract at residues 78-280 is catalytic; sequence ANVANVVTDA…RVDPGPNLTC (203 aa). C100 and C149 are joined by a disulfide. The active-site Proton donor is E144. N155 is a glycosylation site (N-linked (GlcNAc...) asparagine). Intrachain disulfides connect C161/C170 and C248/C280. N277 carries an N-linked (GlcNAc...) asparagine glycan.

The protein belongs to the glycosyl hydrolase 19 family. Chitinase class IV subfamily.

It localises to the secreted. The catalysed reaction is Random endo-hydrolysis of N-acetyl-beta-D-glucosaminide (1-&gt;4)-beta-linkages in chitin and chitodextrins.. Its activity is regulated as follows. Inactivated by l-ethyl-3-(3-dimethylaminopropyl)carbodiimide (EDC) in the absence of exogenous nucleophiles (e.g. GlcNAc4, GlcNAc3 and GlcNAc2). Not inhibited by tetra-N-acetylchitopentaose or modified chitotetraose substrate TMG-chitotriomycin-pMP, containing a free, non-acetylated glucosaminyl residue or a N-trimethylamino glucosamine (TMG) residue at the non-reducing terminus, respectively. Defense against chitin-containing fungal pathogens. Hydrolyzes glycol chitin and tetra-N-acetylchitotetraose in vitro. Its action is countered by fungal polyglycine hydrolases and fungalysin, that cleave the chitin-binding domain from the protein. The polypeptide is Endochitinase A (Zea mays (Maize)).